The following is a 126-amino-acid chain: Aspartate 1-decarboxylase (126 aa).

The active-site Schiff-base intermediate with substrate; via pyruvic acid is the Ser-25. Ser-25 is modified (pyruvic acid (Ser)). Position 57 (Thr-57) interacts with substrate. Catalysis depends on Tyr-58, which acts as the Proton donor. 73 to 75 lines the substrate pocket; it reads GAA.

This sequence belongs to the PanD family. In terms of assembly, heterooctamer of four alpha and four beta subunits. Pyruvate is required as a cofactor. Is synthesized initially as an inactive proenzyme, which is activated by self-cleavage at a specific serine bond to produce a beta-subunit with a hydroxyl group at its C-terminus and an alpha-subunit with a pyruvoyl group at its N-terminus.

Its subcellular location is the cytoplasm. The catalysed reaction is L-aspartate + H(+) = beta-alanine + CO2. Its pathway is cofactor biosynthesis; (R)-pantothenate biosynthesis; beta-alanine from L-aspartate: step 1/1. Catalyzes the pyruvoyl-dependent decarboxylation of aspartate to produce beta-alanine. This is Aspartate 1-decarboxylase from Azotobacter vinelandii (strain DJ / ATCC BAA-1303).